Here is a 417-residue protein sequence, read N- to C-terminus: Serine hydroxymethyltransferase (417 aa).

Residues Leu119 and 123–125 contribute to the (6S)-5,6,7,8-tetrahydrofolate site; that span reads GHL. Lys227 bears the N6-(pyridoxal phosphate)lysine mark.

It belongs to the SHMT family. In terms of assembly, homodimer. Pyridoxal 5'-phosphate serves as cofactor.

The protein resides in the cytoplasm. The enzyme catalyses (6R)-5,10-methylene-5,6,7,8-tetrahydrofolate + glycine + H2O = (6S)-5,6,7,8-tetrahydrofolate + L-serine. The protein operates within one-carbon metabolism; tetrahydrofolate interconversion. Its pathway is amino-acid biosynthesis; glycine biosynthesis; glycine from L-serine: step 1/1. Functionally, catalyzes the reversible interconversion of serine and glycine with tetrahydrofolate (THF) serving as the one-carbon carrier. This reaction serves as the major source of one-carbon groups required for the biosynthesis of purines, thymidylate, methionine, and other important biomolecules. Also exhibits THF-independent aldolase activity toward beta-hydroxyamino acids, producing glycine and aldehydes, via a retro-aldol mechanism. This chain is Serine hydroxymethyltransferase, found in Buchnera aphidicola subsp. Cinara cedri (strain Cc).